We begin with the raw amino-acid sequence, 120 residues long: Prefoldin subunit beta (120 aa).

The protein belongs to the prefoldin subunit beta family. In terms of assembly, heterohexamer of two alpha and four beta subunits.

The protein localises to the cytoplasm. Molecular chaperone capable of stabilizing a range of proteins. Seems to fulfill an ATP-independent, HSP70-like function in archaeal de novo protein folding. The protein is Prefoldin subunit beta of Methanothrix thermoacetophila (strain DSM 6194 / JCM 14653 / NBRC 101360 / PT) (Methanosaeta thermophila).